Reading from the N-terminus, the 890-residue chain is MANNIIPNVSSGDLVGSTPTFPPNAVVRGDFLYLRDVDGNQIPGRTVSDGDEITVLFISNEKNIVLVQYPTSSGYRQGYVTNATSIIKYKDDYSWVNGSTPEPVYDFDKTTQIGTLDPRERAVVLYKVDGMTYVAYDTGKGKLTKSGLVHYEGSGSSTGGGSFNGVAPGEVVPGGFTYENNAEVVGDELYLRDANGNLIPGRSVSVGDKITVLDVGYTKQLALVQYPAGDVVRQGYVTNATNLIRYFNQYSWHNGSTSEEVLDENGGHLGSLNPYEAATLLYEKNGMKHVVYDTNKGPNTKSGYVKYEGAAATRVDIPYPSITNAQKIVYGISGRGRELAAYKVGNGSNSLVFVCAIHGWEDNWAADGIELTRIGNGLIEHFQNAGTNNWSLYIIPVANPDGLSEGFTNNGPGRCTIVGAVDCNRDFPLGFSPGGVPRYHSGSEPLSVSESKSLHDFIQGVKNRTSGEMCVIDLHGWEGAAIGNPEIGEYFRNQFGFGQRSGYGDNRGFMIGWAKSIGAKAALIELPGSTKSHSDVVNGRYLQKIINAVTNLIGGSGGSSSGGSSFSDVSYEATGEVINVQSFLNVREGAGLYTNSIGQLRQGNKVNIVAKNGDWYKIKYGSEYGYVNSGYIIILKNNTSVKLEDWQEDCIKFGWGPITKEKYLEYMDSTRLYKSIENDISQAIKNKSLINVINPLNFSVSEMIACTQIVFNNETTSFFRDEWYSKSNPNFIVKYKKLSNGQIIVLDRINIKKPEKLKTKIPKAAKGAFKDTIKFEFFKGIDGWFTAISGAISIGSDLSVFQSNGELKSNEDIAKALAAAVIVNGVETMFCAFLGGFIAQCIAPEFPIVAAVAGAIVSAIAAFAIGYFVDNHEKEKYLMNSFKGLIDYLF.

SH3b domains follow at residues 22 to 84 (PPNA…TNAT) and 179 to 241 (ENNA…TNAT). The 247-residue stretch at 303-549 (GYVKYEGAAA…RYLQKIINAV (247 aa)) folds into the Peptidase M14 domain. His-358, Glu-361, and His-475 together coordinate Zn(2+). Residue Glu-525 is the Proton donor/acceptor of the active site. The SH3b 3 domain maps to 572–636 (EATGEVINVQ…VNSGYIIILK (65 aa)). A hydrophobic region spans residues 815–869 (KALAAAVIVNGVETMFCAFLGGFIAQCIAPEFPIVAAVAGAIVSAIAAFAIGYFV).

Zn(2+) is required as a cofactor.

May function as an ionophore. The polypeptide is Bacteriocin BCN5 (bcn) (Clostridium perfringens).